The chain runs to 429 residues: Dual-specificity RNA methyltransferase RlmN (429 aa).

A disordered region spans residues 1–23; that stretch reads MRAMQTHTEIAPMPIPGHVDPVP. Glutamate 128 serves as the catalytic Proton acceptor. The Radical SAM core domain maps to 134–397; that stretch reads DADRGTLCVS…APVRTPRGRD (264 aa). Cysteine 141 and cysteine 402 form a disulfide bridge. Residues cysteine 148, cysteine 152, and cysteine 155 each contribute to the [4Fe-4S] cluster site. S-adenosyl-L-methionine is bound by residues 226–227, serine 258, 280–282, and asparagine 359; these read GE and SLH. Cysteine 402 functions as the S-methylcysteine intermediate in the catalytic mechanism.

This sequence belongs to the radical SAM superfamily. RlmN family. [4Fe-4S] cluster is required as a cofactor.

It is found in the cytoplasm. It catalyses the reaction adenosine(2503) in 23S rRNA + 2 reduced [2Fe-2S]-[ferredoxin] + 2 S-adenosyl-L-methionine = 2-methyladenosine(2503) in 23S rRNA + 5'-deoxyadenosine + L-methionine + 2 oxidized [2Fe-2S]-[ferredoxin] + S-adenosyl-L-homocysteine. The catalysed reaction is adenosine(37) in tRNA + 2 reduced [2Fe-2S]-[ferredoxin] + 2 S-adenosyl-L-methionine = 2-methyladenosine(37) in tRNA + 5'-deoxyadenosine + L-methionine + 2 oxidized [2Fe-2S]-[ferredoxin] + S-adenosyl-L-homocysteine. In terms of biological role, specifically methylates position 2 of adenine 2503 in 23S rRNA and position 2 of adenine 37 in tRNAs. m2A2503 modification seems to play a crucial role in the proofreading step occurring at the peptidyl transferase center and thus would serve to optimize ribosomal fidelity. The protein is Dual-specificity RNA methyltransferase RlmN of Novosphingobium aromaticivorans (strain ATCC 700278 / DSM 12444 / CCUG 56034 / CIP 105152 / NBRC 16084 / F199).